The sequence spans 210 residues: Ribosomal RNA large subunit methyltransferase E (210 aa).

Glycine 67, tryptophan 69, aspartate 87, aspartate 103, and aspartate 128 together coordinate S-adenosyl-L-methionine. Lysine 168 acts as the Proton acceptor in catalysis.

Belongs to the class I-like SAM-binding methyltransferase superfamily. RNA methyltransferase RlmE family.

The protein localises to the cytoplasm. The catalysed reaction is uridine(2552) in 23S rRNA + S-adenosyl-L-methionine = 2'-O-methyluridine(2552) in 23S rRNA + S-adenosyl-L-homocysteine + H(+). Its function is as follows. Specifically methylates the uridine in position 2552 of 23S rRNA at the 2'-O position of the ribose in the fully assembled 50S ribosomal subunit. This chain is Ribosomal RNA large subunit methyltransferase E, found in Psychrobacter cryohalolentis (strain ATCC BAA-1226 / DSM 17306 / VKM B-2378 / K5).